Consider the following 273-residue polypeptide: NADPH-dependent 7-cyano-7-deazaguanine reductase (273 aa).

81-83 (VES) is a substrate binding site. 83 to 84 (SK) contacts NADPH. Cys-179 functions as the Thioimide intermediate in the catalytic mechanism. Asp-186 serves as the catalytic Proton donor. Residue 218-219 (AE) participates in substrate binding. 247 to 248 (RG) is an NADPH binding site.

Belongs to the GTP cyclohydrolase I family. QueF type 2 subfamily. Homodimer.

It is found in the cytoplasm. The enzyme catalyses 7-aminomethyl-7-carbaguanine + 2 NADP(+) = 7-cyano-7-deazaguanine + 2 NADPH + 3 H(+). The protein operates within tRNA modification; tRNA-queuosine biosynthesis. Functionally, catalyzes the NADPH-dependent reduction of 7-cyano-7-deazaguanine (preQ0) to 7-aminomethyl-7-deazaguanine (preQ1). This is NADPH-dependent 7-cyano-7-deazaguanine reductase from Rickettsia akari (strain Hartford).